Here is a 359-residue protein sequence, read N- to C-terminus: CMP-N-acetylneuraminate-poly-alpha-2,8-sialyltransferase (359 aa).

Residues methionine 1–arginine 7 lie on the Cytoplasmic side of the membrane. The chain crosses the membrane as a helical; Signal-anchor for type II membrane protein span at residues tryptophan 8 to tyrosine 20. The Lumenal portion of the chain corresponds to lysine 21–glutamine 359. N-linked (GlcNAc...) asparagine glycosylation is found at asparagine 50, asparagine 74, and asparagine 119. 2 cysteine pairs are disulfide-bonded: cysteine 142–cysteine 292 and cysteine 156–cysteine 356. CMP-N-acetyl-beta-neuraminate is bound by residues asparagine 147 and asparagine 170. N-linked (GlcNAc...) asparagine glycosylation is found at asparagine 204 and asparagine 219. Residues serine 279, threonine 280, glycine 281, and tryptophan 301 each contribute to the CMP-N-acetyl-beta-neuraminate site. The Proton donor/acceptor role is filled by histidine 331.

The protein belongs to the glycosyltransferase 29 family. Autopolysialylated.

Its subcellular location is the golgi apparatus membrane. It is found in the secreted. The catalysed reaction is [N-acetyl-alpha-D-neuraminosyl-(2-&gt;8)](n) + CMP-N-acetyl-beta-neuraminate = [N-acetyl-alpha-D-neuraminosyl-(2-&gt;8)](n+1) + CMP + H(+). It functions in the pathway protein modification; protein glycosylation. Functionally, catalyzes the transfer of a sialic acid from a CMP-linked sialic acid donor onto a terminal alpha-2,3-, alpha-2,6-, or alpha-2,8-linked sialic acid of an N-linked glycan protein acceptor through alpha-2,8-linkages. Therefore, participates in polysialic acid synthesis on various sialylated N-acetyllactosaminyl oligosaccharides, including NCAM1 N-glycans, FETUB N-glycans and AHSG. It is noteworthy that alpha-2,3-linked sialic acid is apparently a better acceptor than alpha-2,6-linked sialic acid. This chain is CMP-N-acetylneuraminate-poly-alpha-2,8-sialyltransferase, found in Cricetulus griseus (Chinese hamster).